The following is a 136-amino-acid chain: uncharacterized protein (136 aa).

In terms of tissue distribution, widely expressed.

This is an uncharacterized protein from Homo sapiens (Human).